A 277-amino-acid chain; its full sequence is Large ribosomal subunit protein uL2 (277 aa).

2 disordered regions span residues 1–20 (MAVK…TTAD) and 210–277 (GRSR…RGGK). Residues 210–221 (GRSRWLGRKPHQ) show a composition bias toward basic residues.

It belongs to the universal ribosomal protein uL2 family. Part of the 50S ribosomal subunit. Forms a bridge to the 30S subunit in the 70S ribosome.

One of the primary rRNA binding proteins. Required for association of the 30S and 50S subunits to form the 70S ribosome, for tRNA binding and peptide bond formation. It has been suggested to have peptidyltransferase activity; this is somewhat controversial. Makes several contacts with the 16S rRNA in the 70S ribosome. The protein is Large ribosomal subunit protein uL2 of Deinococcus deserti (strain DSM 17065 / CIP 109153 / LMG 22923 / VCD115).